Reading from the N-terminus, the 39-residue chain is uncharacterized protein (39 aa).

This is an uncharacterized protein from Bacillus subtilis (strain 168).